We begin with the raw amino-acid sequence, 1266 residues long: Rho GTPase-activating protein 29 (1266 aa).

Phosphoserine is present on residues serine 166, serine 171, serine 174, and serine 185. The region spanning 187-457 (IELDNLLLKN…SAKLYDPGQE (271 aa)) is the F-BAR domain. Residues 291-413 (RKNEMEKQRK…EILTQLRTLV (123 aa)) are a coiled coil. Phosphoserine is present on residues serine 496, serine 516, and serine 549. Low complexity predominate over residues 538–556 (SESTGGSSESRSLDSESIS). The disordered stretch occupies residues 538-596 (SESTGGSSESRSLDSESISPGDFHRKLPRTPSSGTMSSADDLDEREPPSPSEAGPNSLG). Residues 609-654 (THKFRKLRSPTKCRDCEGIVMFPGVECEECLLVCHRKCLENLVIVC) form a Phorbol-ester/DAG-type zinc finger. Residues 668 to 883 (AEFIQVAKKE…FLITYAQKIF (216 aa)) enclose the Rho-GAP domain. Phosphoserine is present on residues serine 915, serine 951, and serine 1023. Disordered regions lie at residues 1033–1054 (AGSPTERSSRNTGNTDSDKFGK), 1114–1153 (VSTGNNRGHSSGAAQPSKAHADPARSARDTSEHSSSDSCP), and 1222–1248 (VQTSGQPKESSEEPGLPEGTPTCQRPR). Residues 1115-1127 (STGNNRGHSSGAA) are compositionally biased toward polar residues. Basic and acidic residues predominate over residues 1132-1148 (AHADPARSARDTSEHSS). Serine 1149 and serine 1151 each carry phosphoserine. The interaction with PTPN13/PTPL1 stretch occupies residues 1263-1266 (PQFV).

Interacts with PTPN13/PTPL1. Interacts with RAP2A via its coiled coil domain. Interacts with RASIP1.

In terms of biological role, GTPase activator for the Rho-type GTPases by converting them to an inactive GDP-bound state. Has strong activity toward RHOA, and weaker activity toward RAC1 and CDC42. May act as a specific effector of RAP2A to regulate Rho. In concert with RASIP1, suppresses RhoA signaling and dampens ROCK and MYH9 activities in endothelial cells and plays an essential role in blood vessel tubulogenesis. The chain is Rho GTPase-activating protein 29 (Arhgap29) from Rattus norvegicus (Rat).